Here is a 374-residue protein sequence, read N- to C-terminus: Quinolinate synthase (374 aa).

Residues histidine 53 and serine 70 each contribute to the iminosuccinate site. Residue cysteine 116 participates in [4Fe-4S] cluster binding. Iminosuccinate-binding positions include 148–150 and serine 169; that span reads YMN. Cysteine 236 is a [4Fe-4S] cluster binding site. Iminosuccinate contacts are provided by residues 262–264 and threonine 279; that span reads HPE. [4Fe-4S] cluster is bound at residue cysteine 327.

Belongs to the quinolinate synthase family. Type 3 subfamily. Requires [4Fe-4S] cluster as cofactor.

Its subcellular location is the cytoplasm. It carries out the reaction iminosuccinate + dihydroxyacetone phosphate = quinolinate + phosphate + 2 H2O + H(+). Its pathway is cofactor biosynthesis; NAD(+) biosynthesis; quinolinate from iminoaspartate: step 1/1. Catalyzes the condensation of iminoaspartate with dihydroxyacetone phosphate to form quinolinate. The sequence is that of Quinolinate synthase from Haloarcula marismortui (strain ATCC 43049 / DSM 3752 / JCM 8966 / VKM B-1809) (Halobacterium marismortui).